The primary structure comprises 25 residues: GIGAAILSAGKSIIKGLANGLAEHF.

Residue phenylalanine 25 is modified to Phenylalanine amide.

The protein belongs to the bombinin family. As to expression, expressed by the skin glands.

Its subcellular location is the secreted. Functionally, has antimicrobial activity, but no hemolytic activity. Preference on killing Gram-negative non-enteric bacteria. The chain is Bombinin-like peptide 4 from Bombina orientalis (Oriental fire-bellied toad).